Here is a 111-residue protein sequence, read N- to C-terminus: Ferredoxin, 2Fe-2S (111 aa).

4 residues coordinate [2Fe-2S] cluster: C10, C23, C56, and C60.

In terms of assembly, homodimer in solution. Requires [2Fe-2S] cluster as cofactor.

Its function is as follows. Ferredoxins are iron-sulfur proteins that transfer electrons in a wide variety of metabolic reactions. The protein is Ferredoxin, 2Fe-2S (fdx4) of Aquifex aeolicus (strain VF5).